Here is a 149-residue protein sequence, read N- to C-terminus: Thioredoxin-like protein 4B (149 aa).

Belongs to the DIM1 family. As to quaternary structure, homodimer. Interacts with the U5-102 kDa protein subunit of the spliceosome.

Its subcellular location is the nucleus. Essential role in pre-mRNA splicing. Required in cell cycle progression for S/G(2) transition. The chain is Thioredoxin-like protein 4B (TXNL4B) from Homo sapiens (Human).